Reading from the N-terminus, the 368-residue chain is CCA-adding enzyme (368 aa).

Positions 8 and 11 each coordinate ATP. Glycine 8 and arginine 11 together coordinate CTP. Mg(2+)-binding residues include aspartate 21 and aspartate 23. Residues arginine 91, arginine 137, and arginine 140 each contribute to the ATP site. CTP-binding residues include arginine 91, arginine 137, and arginine 140.

Belongs to the tRNA nucleotidyltransferase/poly(A) polymerase family. Bacterial CCA-adding enzyme type 2 subfamily. Mg(2+) is required as a cofactor.

It catalyses the reaction a tRNA precursor + 2 CTP + ATP = a tRNA with a 3' CCA end + 3 diphosphate. It carries out the reaction a tRNA with a 3' CCA end + 2 CTP + ATP = a tRNA with a 3' CCACCA end + 3 diphosphate. In terms of biological role, catalyzes the addition and repair of the essential 3'-terminal CCA sequence in tRNAs without using a nucleic acid template. Adds these three nucleotides in the order of C, C, and A to the tRNA nucleotide-73, using CTP and ATP as substrates and producing inorganic pyrophosphate. tRNA 3'-terminal CCA addition is required both for tRNA processing and repair. Also involved in tRNA surveillance by mediating tandem CCA addition to generate a CCACCA at the 3' terminus of unstable tRNAs. While stable tRNAs receive only 3'-terminal CCA, unstable tRNAs are marked with CCACCA and rapidly degraded. In Pseudomonas putida (strain ATCC 700007 / DSM 6899 / JCM 31910 / BCRC 17059 / LMG 24140 / F1), this protein is CCA-adding enzyme.